Reading from the N-terminus, the 427-residue chain is Glutamyl-tRNA reductase (427 aa).

Residues 50 to 53 (TCNR), Ser-110, 115 to 117 (ETQ), and Gln-121 contribute to the substrate site. Residue Cys-51 is the Nucleophile of the active site. 190–195 (GAGEMG) contacts NADP(+).

Belongs to the glutamyl-tRNA reductase family. As to quaternary structure, homodimer.

The enzyme catalyses (S)-4-amino-5-oxopentanoate + tRNA(Glu) + NADP(+) = L-glutamyl-tRNA(Glu) + NADPH + H(+). It functions in the pathway porphyrin-containing compound metabolism; protoporphyrin-IX biosynthesis; 5-aminolevulinate from L-glutamyl-tRNA(Glu): step 1/2. Catalyzes the NADPH-dependent reduction of glutamyl-tRNA(Glu) to glutamate 1-semialdehyde (GSA). The polypeptide is Glutamyl-tRNA reductase (Campylobacter concisus (strain 13826)).